A 338-amino-acid chain; its full sequence is Sporulation protein YdcC (338 aa).

Residues 8–25 (FVLLLTGLLAVLILSACG) traverse the membrane as a helical segment.

The protein localises to the cell membrane. Required for efficient sporulation. This Bacillus subtilis (strain 168) protein is Sporulation protein YdcC (ydcC).